We begin with the raw amino-acid sequence, 543 residues long: CTP synthase (543 aa).

Residues 1–267 are amidoligase domain; the sequence is MTKYVFVTGG…ATQVLNLLNL (267 aa). Ser-13 provides a ligand contact to CTP. Ser-13 provides a ligand contact to UTP. Residues 14–19 and Asp-71 each bind ATP; that span reads SIGKGI. 2 residues coordinate Mg(2+): Asp-71 and Glu-141. Residues 148 to 150, 188 to 193, and Lys-224 each bind CTP; these read DIE and KTKPTQ. UTP is bound by residues 188-193 and Lys-224; that span reads KTKPTQ. The Glutamine amidotransferase type-1 domain occupies 292 to 534; it reads EVAIVGKYVR…LAAAAKNSNR (243 aa). Gly-354 is an L-glutamine binding site. Cys-381 (nucleophile; for glutamine hydrolysis) is an active-site residue. L-glutamine-binding positions include 382 to 385, Glu-405, and Arg-462; that span reads LGMQ. Active-site residues include His-507 and Glu-509.

The protein belongs to the CTP synthase family. In terms of assembly, homotetramer.

It catalyses the reaction UTP + L-glutamine + ATP + H2O = CTP + L-glutamate + ADP + phosphate + 2 H(+). It carries out the reaction L-glutamine + H2O = L-glutamate + NH4(+). The catalysed reaction is UTP + NH4(+) + ATP = CTP + ADP + phosphate + 2 H(+). It participates in pyrimidine metabolism; CTP biosynthesis via de novo pathway; CTP from UDP: step 2/2. Allosterically activated by GTP, when glutamine is the substrate; GTP has no effect on the reaction when ammonia is the substrate. The allosteric effector GTP functions by stabilizing the protein conformation that binds the tetrahedral intermediate(s) formed during glutamine hydrolysis. Inhibited by the product CTP, via allosteric rather than competitive inhibition. Its function is as follows. Catalyzes the ATP-dependent amination of UTP to CTP with either L-glutamine or ammonia as the source of nitrogen. Regulates intracellular CTP levels through interactions with the four ribonucleotide triphosphates. The chain is CTP synthase from Thermosynechococcus vestitus (strain NIES-2133 / IAM M-273 / BP-1).